The sequence spans 510 residues: NAD(P)H-quinone oxidoreductase subunit 2, chloroplastic (510 aa).

12 helical membrane passes run 24–44 (LLLF…GLIL), 59–79 (WFYF…LFRW), 99–119 (IFQF…VEYI), 124–144 (MAIT…MFLC), 149–169 (LITI…LSGY), 183–203 (YLLM…WLYG), 229–249 (ISIA…PAPF), 295–315 (WHLL…LIAI), 323–343 (MLAY…IVGD), 347–367 (GYAS…GTFA), 395–415 (ALSS…AGFF), and 418–438 (LHLF…IGLL).

The protein belongs to the complex I subunit 2 family. NDH is composed of at least 16 different subunits, 5 of which are encoded in the nucleus.

It localises to the plastid. The protein resides in the chloroplast thylakoid membrane. The catalysed reaction is a plastoquinone + NADH + (n+1) H(+)(in) = a plastoquinol + NAD(+) + n H(+)(out). It carries out the reaction a plastoquinone + NADPH + (n+1) H(+)(in) = a plastoquinol + NADP(+) + n H(+)(out). In terms of biological role, NDH shuttles electrons from NAD(P)H:plastoquinone, via FMN and iron-sulfur (Fe-S) centers, to quinones in the photosynthetic chain and possibly in a chloroplast respiratory chain. The immediate electron acceptor for the enzyme in this species is believed to be plastoquinone. Couples the redox reaction to proton translocation, and thus conserves the redox energy in a proton gradient. This is NAD(P)H-quinone oxidoreductase subunit 2, chloroplastic from Yucca glauca (Soapweed yucca).